The chain runs to 378 residues: 4-hydroxy-3-methylbut-2-en-1-yl diphosphate synthase (flavodoxin) (378 aa).

Residues C268, C271, C303, and E310 each coordinate [4Fe-4S] cluster.

It belongs to the IspG family. The cofactor is [4Fe-4S] cluster.

It catalyses the reaction (2E)-4-hydroxy-3-methylbut-2-enyl diphosphate + oxidized [flavodoxin] + H2O + 2 H(+) = 2-C-methyl-D-erythritol 2,4-cyclic diphosphate + reduced [flavodoxin]. The protein operates within isoprenoid biosynthesis; isopentenyl diphosphate biosynthesis via DXP pathway; isopentenyl diphosphate from 1-deoxy-D-xylulose 5-phosphate: step 5/6. Functionally, converts 2C-methyl-D-erythritol 2,4-cyclodiphosphate (ME-2,4cPP) into 1-hydroxy-2-methyl-2-(E)-butenyl 4-diphosphate. This Corynebacterium efficiens (strain DSM 44549 / YS-314 / AJ 12310 / JCM 11189 / NBRC 100395) protein is 4-hydroxy-3-methylbut-2-en-1-yl diphosphate synthase (flavodoxin).